We begin with the raw amino-acid sequence, 341 residues long: Trace amine-associated receptor 13c (341 aa).

Over Met1 to Val34 the chain is Extracellular. Asn19 carries an N-linked (GlcNAc...) asparagine glycan. 2 disulfide bridges follow: Cys22-Cys186 and Cys105-Cys186. Residues Val35 to Ile55 traverse the membrane as a helical segment. At Ser56 to Asn68 the chain is on the cytoplasmic side. A helical transmembrane segment spans residues Ile69–Ser89. Over Met90 to Cys105 the chain is Extracellular. The helical transmembrane segment at Leu106–Ile126 threads the bilayer. Topologically, residues Ala127–Pro147 are cytoplasmic. A helical membrane pass occupies residues Val148–Val168. The Extracellular portion of the chain corresponds to Tyr169–Asn195. The helical transmembrane segment at Ala196–Ala219 threads the bilayer. Residues Arg220–Thr257 are Cytoplasmic-facing. The chain crosses the membrane as a helical span at residues Leu258–Val278. Topologically, residues Asp279 to Asp292 are extracellular. The N-linked (GlcNAc...) asparagine glycan is linked to Asn283. A helical transmembrane segment spans residues Ala293–Tyr313. Over Pro314–Val341 the chain is Cytoplasmic.

The protein belongs to the G-protein coupled receptor 1 family. In terms of tissue distribution, expressed in olfactory epithelium (at protein level). Detected in a sparse population of olfactory sensory neurons.

It localises to the cell membrane. Functionally, olfactory receptor for medium length odd-chained diamines including cadaverine which is generated by bacterial decarboxylation of the basic amino acid lysine and contributes to the odor of decomposing tissue. Mediates pronounced innate aversion behavior to cadaverine. This chain is Trace amine-associated receptor 13c, found in Danio rerio (Zebrafish).